The following is a 1182-amino-acid chain: MEAMSPQQDALGAQPGRSSSLTGMSRIAGGPGTKKKMKTLAERRRSAPSLILDKALQKRPSTRDSHSASIDTCAFLSSFMCSSRTLLIDGPVELKRGLQRQERHLFLFNDLFVSAKIKYNNNFKIKNKVKLADMWTASCVDEVGEGNTNALKSFVLGWPTVNFVATFSSPEQKDKWLSLLQRYIALEKEKDYPKSIPLKIFAKDIGNCAYFKTISVMNSDTASEVINMSLQMLGITGSERDYQLWVNSGKEAAPYPLIGHEYPYGIKMSHLRDTALLTQGSKDSASPSQLQEPFLMEQLPREMQCQFILKPTRLATAQQLSDSSHKTYKRRRSIINWAFWRGSSTHLDNLPVSPTSPMPGQLFGVSLPDICENDNLPKPILDMLSFLNQKGPLTKGIFRQSANMKSCRELKEKLNSGIEVHLDCESIFVIASVLKDFLRNIPESIFSSDLYDHWVCVMDQGNDEEKINTIQRLLDQLPRANVVFLRYLFGVLHNIEQHSLSNQMTAFNLAVCIAPSILWPPASSSPELENEFTKKVSLLIQFLIENCCRIFGEEITSLLGELSERSDREHTPDTSCFQLNDSSYDSLENELNEDADAPCSDLVKRLGQGSRSMDSVLTLSDYDLEPPEAEGLLTLSNFDLDQSKEEHIRTKQPLETKPVSVFVAYRKVSLGEHTRAPDGPGTPSCLPATASDARKVFRRHRRSSEPSIDYLDAKLSYLREFYQKKLRKSSCDAVLSRKDEDYLKQTQPQKKGDQRCFKQSSVTGTDVSKRNTANENIKKKSLSGHEGIQETPFTKSKPVAISVASYMSSQDHSWEQPFEADACRFSPPHIADAQKSSRAHRRCSEPSIDDQNYKLSYLRGVYSKKQSKTSCEAGLLHGEEDYLKRHKSLQMEGQKLINQSLVMGIEVGKSSSSTNQSTEKVLPPRLNLCPRASYSSLSSPGTSPSGSSVSSQDSAFSQISEHSVFTPTETSSPIDCTFRAQRKQEELSSDCDSPSLVSGMPGPSTGQASSHLAYLRKGTTEQLPQMHSVTLHPSTWLRSGLVTLKNWSLKKKTKAARPEDRKDCSLKEPLELPACAAGTPEADSLQESQEDIHLGVDEGAGQTACGLSSYACQDSEQHASSPFCLAGSRLTLGMKLHEGEESGGQYPCDNPWEGAPSGLETSEDAANTGVEPATVCNDGDRH.

The disordered stretch occupies residues 1-40; sequence MEAMSPQQDALGAQPGRSSSLTGMSRIAGGPGTKKKMKTL. Ser46 carries the phosphoserine modification. The region spanning 86–187 is the PH domain; sequence LLIDGPVELK…SLLQRYIALE (102 aa). One can recognise a Ras-associating domain in the interval 194–283; the sequence is KSIPLKIFAK…TALLTQGSKD (90 aa). The region spanning 365–551 is the Rho-GAP domain; it reads VSLPDICEND…FLIENCCRIF (187 aa). 2 positions are modified to phosphoserine: Ser704 and Ser730. Disordered regions lie at residues 744–791, 932–953, 981–1009, and 1140–1182; these read KQTQ…IQET, ASYS…SSQD, QRKQ…GQAS, and EESG…GDRH. Over residues 757 to 775 the composition is skewed to polar residues; sequence FKQSSVTGTDVSKRNTANE. Low complexity predominate over residues 933–953; sequence SYSSLSSPGTSPSGSSVSSQD.

As to expression, highest expression is found in testis. Ubiquitously expressed in extragonadal tissues.

In terms of biological role, GTPase activator for the Rho-type GTPases by converting them to an inactive GDP-bound state. The chain is Rho GTPase-activating protein 20 (Arhgap20) from Rattus norvegicus (Rat).